We begin with the raw amino-acid sequence, 134 residues long: Kinetochore-binding protein 3 (134 aa).

The protein resides in the nucleus. The protein localises to the chromosome. It is found in the centromere. Its subcellular location is the kinetochore. This Caenorhabditis elegans protein is Kinetochore-binding protein 3 (kbp-3).